The sequence spans 104 residues: Large ribosomal subunit protein uL24 (104 aa).

It belongs to the universal ribosomal protein uL24 family. In terms of assembly, part of the 50S ribosomal subunit.

One of two assembly initiator proteins, it binds directly to the 5'-end of the 23S rRNA, where it nucleates assembly of the 50S subunit. Its function is as follows. One of the proteins that surrounds the polypeptide exit tunnel on the outside of the subunit. This is Large ribosomal subunit protein uL24 from Ectopseudomonas mendocina (strain ymp) (Pseudomonas mendocina).